Consider the following 272-residue polypeptide: Cyanophycinase (272 aa).

Catalysis depends on charge relay system residues serine 132, glutamate 150, and histidine 174.

It belongs to the peptidase S51 family.

It catalyses the reaction [L-4-(L-arginin-2-N-yl)aspartate](n) + H2O = [L-4-(L-arginin-2-N-yl)aspartate](n-1) + L-4-(L-arginin-2-N-yl)aspartate. Its function is as follows. Exopeptidase that catalyzes the hydrolytic cleavage of multi-L-arginyl-poly-L-aspartic acid (cyanophycin; a water-insoluble reserve polymer) into aspartate-arginine dipeptides. In Geminocystis herdmanii (strain PCC 6308) (Synechocystis sp. (strain PCC 6308)), this protein is Cyanophycinase (cphB).